The following is a 421-amino-acid chain: F-box only protein 9 (421 aa).

Positions 1-63 (MAESNQNTDG…AELRRRQETA (63 aa)) are disordered. A compositionally biased stretch (acidic residues) spans 11–20 (AVEEGEDENT). Residues 40–52 (LQPSSGGQRSFSR) are compositionally biased toward polar residues. Residues 54-63 (AELRRRQETA) show a composition bias toward basic and acidic residues. The TPR repeat unit spans residues 68–101 (ARELFLKAVEEEQNGAVYEAIKYYKSAMQLVPDI). In terms of domain architecture, F-box spans 158-209 (QVHISALPFEVLMYIFRWVVSCDLDLRALEQLSLVCRGFYICARDPEIWRSA).

In terms of assembly, part of the SCF (SKP1-CUL1-F-box) E3 ubiquitin-protein ligase complex SCF(fbxo9).

Its subcellular location is the cytoplasm. It functions in the pathway protein modification; protein ubiquitination. Its function is as follows. Substrate recognition component of a SCF (SKP1-CUL1-F-box protein) E3 ubiquitin-protein ligase complex which mediates the ubiquitination and subsequent proteasomal degradation of target proteins and acts as a regulator of mTOR signaling. In Danio rerio (Zebrafish), this protein is F-box only protein 9 (fbxo9).